A 582-amino-acid chain; its full sequence is Arginine--tRNA ligase (582 aa).

The 'HIGH' region motif lies at 127–137; sequence PNLAKEMHVGH.

The protein belongs to the class-I aminoacyl-tRNA synthetase family. Monomer.

Its subcellular location is the cytoplasm. The enzyme catalyses tRNA(Arg) + L-arginine + ATP = L-arginyl-tRNA(Arg) + AMP + diphosphate. The polypeptide is Arginine--tRNA ligase (Psychromonas ingrahamii (strain DSM 17664 / CCUG 51855 / 37)).